Consider the following 54-residue polypeptide: MGEFGKTLITIVTAIIGVAIIAVIVSQRSNTAGVIQSATSGFSNILKSALAPII.

Residues 4–24 (FGKTLITIVTAIIGVAIIAVI) form a helical membrane-spanning segment.

It localises to the virion membrane. Component of the phage injection machinery. Required for DNA injection in the membrane transformation event. Involved in the formation of the membrane tail tube to connect the virus interior with the host cytosol. Essential for viral infectivity. The chain is Protein P32 (XXXII) from Enterobacteria phage PRD1 (Bacteriophage PRD1).